A 72-amino-acid polypeptide reads, in one-letter code: UPF0729 protein C18orf32 homolog (72 aa).

The segment at 1–33 is necessary for its localzation to the endoplasmic reticulum and lipid droplets; the sequence is MVCIPCIVIPVLLWIFKKFLEPYIYPVVSRIWP. The tract at residues 36–72 is disordered; sequence AVQQSGDKNMSKVDCKGAGTNGLPTKGPTEVSDKKKD.

Belongs to the UPF0729 family. As to quaternary structure, interacts with DERL1 and AMFR. Undergoes ER-associated degradation (ERAD).

It localises to the endoplasmic reticulum. Its subcellular location is the lipid droplet. In terms of biological role, may activate the NF-kappa-B signaling pathway. The chain is UPF0729 protein C18orf32 homolog from Mus musculus (Mouse).